The chain runs to 582 residues: Hydrogen peroxide stress regulator 1 (582 aa).

Disordered stretches follow at residues 24-55, 107-154, 347-366, and 375-422; these read SPFAPAQSSSPLPSNSCREYSLPSHPSTHNSS, YPSA…GISK, TSYNDTPQQSVTGSYNSGET, and NTSG…GGKS. Polar residues predominate over residues 107–125; the sequence is YPSASFSTSQHPSQVYNDG. Over residues 126–143 the composition is skewed to low complexity; that stretch reads STLNSNNTTQQLNNNNGF. Positions 375-392 are enriched in polar residues; the sequence is NTSGRSPNSMEATEQIGT. The C2H2-type 1 zinc finger occupies 423–446; the sequence is FVCPECSKKFKRSEHLRRHIRSLH. The C2H2-type 2; atypical zinc finger occupies 452-473; the sequence is FVCICGKRFSRRDNLRQHERLH.

The protein localises to the nucleus. Functionally, transcription factor that globally supports gene expression in response to hydrogen peroxide. In Schizosaccharomyces pombe (strain 972 / ATCC 24843) (Fission yeast), this protein is Hydrogen peroxide stress regulator 1 (hsr1).